The following is a 247-amino-acid chain: 14-3-3 protein gamma (247 aa).

The protein belongs to the 14-3-3 family. As to quaternary structure, homodimer, and heterodimer with other family members.

Its subcellular location is the cytoplasm. Its function is as follows. Adapter protein implicated in the regulation of a large spectrum of both general and specialized signaling pathways. Binds to a large number of partners, usually by recognition of a phosphoserine or phosphothreonine motif. Binding generally results in the modulation of the activity of the binding partner. In Gallus gallus (Chicken), this protein is 14-3-3 protein gamma (YWHAG).